A 223-amino-acid polypeptide reads, in one-letter code: UPF0173 metal-dependent hydrolase THA_544 (223 aa).

It belongs to the UPF0173 family.

The chain is UPF0173 metal-dependent hydrolase THA_544 from Thermosipho africanus (strain TCF52B).